The following is a 300-amino-acid chain: Jacalin-related lectin 33 (300 aa).

The tract at residues 1–20 is disordered; the sequence is MAQKVEAGGGAGGASWDDGV. Alanine 2 is modified (N-acetylalanine). Jacalin-type lectin domains are found at residues 2–146 and 154–297; these read AQKV…YFAT and AKKL…HVMP.

It belongs to the jacalin lectin family. Component of the PYK10 complex, at least composed of PYK10/BGLU23, BGLU21, BGLU22, JAL22, JAL23, PBP1/JAL30, PBP2/JAL31, JAL32, JAL33, JAL34, JAL35, GLL22 and GLL23.

Functionally, sugar-binding protein showing significant affinity for (Glc alpha(1-4)Glc)(3) maltohexaose, (Glc alpha(1-6)Glc)(3) isomaltohexaose, Gal alpha(1-4)Gal beta(1-4)Glc, GalNAc alpha(1-3)(Fuc alpha(1-2)) and Gal beta(1-3)(Fuc alpha(1-4))GlcNAc beta(1-3)Gal beta(1-4)Glc. This is Jacalin-related lectin 33 (JAL33) from Arabidopsis thaliana (Mouse-ear cress).